The following is a 644-amino-acid chain: MVRPNAPDRFNEEKATYVVRGDGEGGDKPDLDRGAEVIRSVVRKLPARPGVYRMLDARGDVLYVGKARALRNRVTSYTQVARLPQRLQRMVAQTRAMEIVTTTSEAEALLLEAQLIKRYRPPYNVLLRDDKSFPFILLRTDHDFPRVQKHRGARRAKGRYYGPFASAGSVARTLNALQKTFLLRSCTDSFFANRSRPCLLYQIRRCSAPCVDRISKEDYAGLVSDAQDFLEGRSTAVQKRLGEAMTRAADAMDFEQAAVLRDRLKALTFIQGSQSVHADGLGDADVFALAAKGGQLCIAGFFIRGGQNWGHRSFFPAHVAGVPETEVMASFLMQFYEGVPPPKLILVDREPDESALLAEALGETAGRKVEISVPQRGNRKRLLDQAVRNAGEELDRRLAESSSQAKLGRELADLFDLENPPQRIEIYDNSHIQGTSALGAMVVAGPEGWMKGAYRKFNIKRAETQPGDDFAMMREVFQRRFARAIEEDPERTKGEWPDLVLIDGGKGQVSAVAAVFSELGIDDLPFVGVAKGPDRNAGRETFYLPDGREFTLPTNNAVLFYIQRLRDEAHRFAIGAHRAKRAKAMGSSPLDEVPGIGPARKKALLMHFGTTRAIKGASLEDLQKAPGVSAAVAQAVYDFYNPGG.

Residues 47 to 125 (ARPGVYRMLD…IKRYRPPYNV (79 aa)) form the GIY-YIG domain. The UVR domain maps to 235-270 (TAVQKRLGEAMTRAADAMDFEQAAVLRDRLKALTFI).

The protein belongs to the UvrC family. In terms of assembly, interacts with UvrB in an incision complex.

Its subcellular location is the cytoplasm. The UvrABC repair system catalyzes the recognition and processing of DNA lesions. UvrC both incises the 5' and 3' sides of the lesion. The N-terminal half is responsible for the 3' incision and the C-terminal half is responsible for the 5' incision. In Sphingopyxis alaskensis (strain DSM 13593 / LMG 18877 / RB2256) (Sphingomonas alaskensis), this protein is UvrABC system protein C.